The chain runs to 612 residues: Protein brambleberry (612 aa).

Positions 1 to 20 are cleaved as a signal peptide; sequence MALWFVLLWVSSLQYAEVEA. Transmembrane regions (helical) follow at residues 364-384 and 417-437; these read LWTCVMHAGYFLLCAVLLSFL and LTLLLFTLSLGRWFVLQLLWA. Disordered stretches follow at residues 452–476 and 555–574; these read LSIYPPKEKTPEKQHEFGEKCPASS and NRSRSSSPNQSLASSSSFSG. Residues 457–470 are compositionally biased toward basic and acidic residues; the sequence is PKEKTPEKQHEFGE. Positions 556 to 574 are enriched in low complexity; the sequence is RSRSSSPNQSLASSSSFSG.

The protein localises to the nucleus membrane. In terms of biological role, required for nuclear membrane fusion during karyogamy. The protein is Protein brambleberry (bmb) of Danio rerio (Zebrafish).